A 69-amino-acid chain; its full sequence is UPF0434 protein Rmet_0534 (69 aa).

The protein belongs to the UPF0434 family.

This Cupriavidus metallidurans (strain ATCC 43123 / DSM 2839 / NBRC 102507 / CH34) (Ralstonia metallidurans) protein is UPF0434 protein Rmet_0534.